A 159-amino-acid chain; its full sequence is MSTDARANHRIKSIEIDEESLAAASRDQEQERQVAIFDLLEGNYFEPAEAGDGPYDVRLSLIENRLAFDIASAGHARRHLLSLSPFRGVIKDYFLICDSYYSAIRNSSPQQIEALDMGRRGLHNEGSNLLRERLEGKVKTDLDTARRLFTLICALHWRG.

It belongs to the UPF0262 family.

In Caulobacter vibrioides (strain NA1000 / CB15N) (Caulobacter crescentus), this protein is UPF0262 protein CCNA_02430.